We begin with the raw amino-acid sequence, 675 residues long: Methionine--tRNA ligase (675 aa).

A 'HIGH' region motif is present at residues 15–25 (PYANGPIHLGH). Residues cysteine 146, cysteine 149, cysteine 159, and cysteine 162 each contribute to the Zn(2+) site. Positions 332-336 (KMSKS) match the 'KMSKS' region motif. Lysine 335 is a binding site for ATP. The tRNA-binding domain maps to 574–675 (DFAKIDLRVA…AGAKPGMRVK (102 aa)).

Belongs to the class-I aminoacyl-tRNA synthetase family. MetG type 1 subfamily. In terms of assembly, homodimer. Zn(2+) is required as a cofactor.

It localises to the cytoplasm. The enzyme catalyses tRNA(Met) + L-methionine + ATP = L-methionyl-tRNA(Met) + AMP + diphosphate. Is required not only for elongation of protein synthesis but also for the initiation of all mRNA translation through initiator tRNA(fMet) aminoacylation. This Shewanella amazonensis (strain ATCC BAA-1098 / SB2B) protein is Methionine--tRNA ligase.